The sequence spans 378 residues: D-alanine--D-alanine ligase (378 aa).

In terms of domain architecture, ATP-grasp spans 140 to 346; it reads KKIISQAGIR…YSDLIDRLIQ (207 aa). Residue 170 to 225 coordinates ATP; the sequence is EEKLGNLTFVKPAKQGSSVGIHRVTNAEEYEKALDDAFKYDYKILVEQGIANPQEI. 3 residues coordinate Mg(2+): aspartate 300, glutamate 313, and asparagine 315.

This sequence belongs to the D-alanine--D-alanine ligase family. It depends on Mg(2+) as a cofactor. Mn(2+) is required as a cofactor.

The protein resides in the cytoplasm. The catalysed reaction is 2 D-alanine + ATP = D-alanyl-D-alanine + ADP + phosphate + H(+). It participates in cell wall biogenesis; peptidoglycan biosynthesis. Cell wall formation. The sequence is that of D-alanine--D-alanine ligase from Limosilactobacillus reuteri (strain DSM 20016) (Lactobacillus reuteri).